The primary structure comprises 214 residues: tRNA (guanine-N(7)-)-methyltransferase (214 aa).

Glu-44, Asp-69, Asp-96, and Asp-118 together coordinate S-adenosyl-L-methionine. Asp-118 is a catalytic residue. Lys-122 contacts substrate. The tract at residues 124–129 (KHEKRR) is interaction with RNA. Substrate contacts are provided by residues Asp-154 and 191 to 194 (TEYE).

This sequence belongs to the class I-like SAM-binding methyltransferase superfamily. TrmB family.

The enzyme catalyses guanosine(46) in tRNA + S-adenosyl-L-methionine = N(7)-methylguanosine(46) in tRNA + S-adenosyl-L-homocysteine. It functions in the pathway tRNA modification; N(7)-methylguanine-tRNA biosynthesis. Catalyzes the formation of N(7)-methylguanine at position 46 (m7G46) in tRNA. In Enterococcus faecalis (strain ATCC 700802 / V583), this protein is tRNA (guanine-N(7)-)-methyltransferase.